The primary structure comprises 391 residues: UPF0229 protein CLL_A3091 (391 aa).

Disordered stretches follow at residues 1 to 23 (MAIF…DKRR) and 75 to 107 (VATG…GNEE). Over residues 80–92 (GEEKRGDKIESGS) the composition is skewed to basic and acidic residues.

This sequence belongs to the UPF0229 family.

This chain is UPF0229 protein CLL_A3091, found in Clostridium botulinum (strain Eklund 17B / Type B).